Consider the following 242-residue polypeptide: MAPK-interacting and spindle-stabilizing protein-like (242 aa).

Disordered regions lie at residues 1–145 and 192–242; these read MSDE…SLGP and PPGA…HSYH. An N-acetylserine modification is found at Ser2. A phosphoserine mark is found at Ser2, Ser6, and Ser15. Polar residues predominate over residues 13–29; the sequence is EQSSAKPPAVTNTKAGH. Low complexity predominate over residues 30–43; it reads SSQGWPGSSPWSNP. 2 stretches are compositionally biased toward pro residues: residues 44–53 and 75–114; these read SAPPAMPSGL and SMPPTGPPPGPPGPFPPPGPSCPPPGVPYPAPAVPGPGPT. Positions 192-210 are enriched in low complexity; that stretch reads PPGAWGPAAPYPGPAGSYP.

It belongs to the MISS family.

The sequence is that of MAPK-interacting and spindle-stabilizing protein-like (Mapk1ip1l) from Mus musculus (Mouse).